A 171-amino-acid polypeptide reads, in one-letter code: S-ribosylhomocysteine lyase (171 aa).

Fe cation contacts are provided by His-54, His-58, and Cys-128.

Belongs to the LuxS family. Homodimer. It depends on Fe cation as a cofactor.

The enzyme catalyses S-(5-deoxy-D-ribos-5-yl)-L-homocysteine = (S)-4,5-dihydroxypentane-2,3-dione + L-homocysteine. Its function is as follows. Involved in the synthesis of autoinducer 2 (AI-2) which is secreted by bacteria and is used to communicate both the cell density and the metabolic potential of the environment. The regulation of gene expression in response to changes in cell density is called quorum sensing. Catalyzes the transformation of S-ribosylhomocysteine (RHC) to homocysteine (HC) and 4,5-dihydroxy-2,3-pentadione (DPD). This is S-ribosylhomocysteine lyase from Escherichia coli O157:H7.